A 700-amino-acid polypeptide reads, in one-letter code: Elongation factor G (700 aa).

Positions 10 to 286 constitute a tr-type G domain; that stretch reads TKVRNIGIMA…AVVDYLPSPL (277 aa). Residues 19-26, 83-87, and 137-140 each bind GTP; these read AHIDAGKT, DTPGH, and NKMD.

The protein belongs to the TRAFAC class translation factor GTPase superfamily. Classic translation factor GTPase family. EF-G/EF-2 subfamily.

Its subcellular location is the cytoplasm. Functionally, catalyzes the GTP-dependent ribosomal translocation step during translation elongation. During this step, the ribosome changes from the pre-translocational (PRE) to the post-translocational (POST) state as the newly formed A-site-bound peptidyl-tRNA and P-site-bound deacylated tRNA move to the P and E sites, respectively. Catalyzes the coordinated movement of the two tRNA molecules, the mRNA and conformational changes in the ribosome. The chain is Elongation factor G from Saccharopolyspora erythraea (strain ATCC 11635 / DSM 40517 / JCM 4748 / NBRC 13426 / NCIMB 8594 / NRRL 2338).